A 674-amino-acid chain; its full sequence is Methionine--tRNA ligase (674 aa).

A 'HIGH' region motif is present at residues 11–21; sequence PYANGDLHLGH. Positions 142, 145, 155, and 158 each coordinate Zn(2+). The short motif at 330–334 is the 'KMSKS' region element; it reads KMSKS. ATP is bound at residue Lys-333. One can recognise a tRNA-binding domain in the interval 574–674; the sequence is DFMKVDLRIA…EGAQPGMRVK (101 aa).

The protein belongs to the class-I aminoacyl-tRNA synthetase family. MetG type 1 subfamily. As to quaternary structure, homodimer. Requires Zn(2+) as cofactor.

It is found in the cytoplasm. It catalyses the reaction tRNA(Met) + L-methionine + ATP = L-methionyl-tRNA(Met) + AMP + diphosphate. Its function is as follows. Is required not only for elongation of protein synthesis but also for the initiation of all mRNA translation through initiator tRNA(fMet) aminoacylation. This is Methionine--tRNA ligase from Francisella tularensis subsp. holarctica (strain OSU18).